We begin with the raw amino-acid sequence, 265 residues long: 6-carboxyhexanoate--CoA ligase (265 aa).

The protein belongs to the BioW family. Homodimer. Mg(2+) serves as cofactor.

It catalyses the reaction heptanedioate + ATP + CoA = 6-carboxyhexanoyl-CoA + AMP + diphosphate. Its pathway is metabolic intermediate metabolism; pimeloyl-CoA biosynthesis; pimeloyl-CoA from pimelate: step 1/1. Its function is as follows. Catalyzes the transformation of pimelate into pimeloyl-CoA with concomitant hydrolysis of ATP to AMP. The polypeptide is 6-carboxyhexanoate--CoA ligase (Syntrophotalea carbinolica (strain DSM 2380 / NBRC 103641 / GraBd1) (Pelobacter carbinolicus)).